Consider the following 577-residue polypeptide: MNIQALLSEKVSQAMIAAGAPADCEPQVRQSAKVQFGDYQANGMMAVAKKLGMAPRQLAEQVLTHLDLSGIASKVEIAGPGFINIFLEPAFLAEQVQQALASERLGVSQPTRQTIVVDYSAPNVAKEMHVGHLRSTIIGDAAVRTLEFLGHHVIRANHVGDWGTQFGMLIAWLEKQQQENAGDMALADLEGFYRDAKKHYDEDEAFAERARNYVVKLQSGDAYFREMWRKLVDITMTQNQITYDRLNVTLTRDDVMGESLYNPMLPGIVADLKAKGLAVESEGATVVFLDEFKNKEGDPMGVIIQKKDGGYLYTTTDIACAKYRYETLHADRVLYYIDSRQHQHLMQAWTIVRKAGYVPDSVPLEHHMFGMMLGKDGKPFKTRAGGTVKLADLLDEALERARRLVAEKNPDMPADELEKLANAVGIGAVKYADLSKNRTTDYIFDWDNMLAFEGNTAPYMQYAYTRVLSVFRKADIDEQALASAPVIISEDREAQLAARLLQFEETLTVVAREGTPHVMCAYLYDVAGLFSGFYEHCPILSAENDAVRNSRLKLAQLTAKTLKLGLDTLGIETVERM.

The 'HIGH' region signature appears at 122–132 (PNVAKEMHVGH).

It belongs to the class-I aminoacyl-tRNA synthetase family. Monomer.

The protein resides in the cytoplasm. The enzyme catalyses tRNA(Arg) + L-arginine + ATP = L-arginyl-tRNA(Arg) + AMP + diphosphate. The sequence is that of Arginine--tRNA ligase from Salmonella agona (strain SL483).